A 500-amino-acid chain; its full sequence is L-arabinose isomerase (500 aa).

E306, E331, H348, and H447 together coordinate Mn(2+).

It belongs to the arabinose isomerase family. Mn(2+) serves as cofactor.

The enzyme catalyses beta-L-arabinopyranose = L-ribulose. It participates in carbohydrate degradation; L-arabinose degradation via L-ribulose; D-xylulose 5-phosphate from L-arabinose (bacterial route): step 1/3. In terms of biological role, catalyzes the conversion of L-arabinose to L-ribulose. This Anoxybacillus flavithermus (strain DSM 21510 / WK1) protein is L-arabinose isomerase.